The following is a 300-amino-acid chain: Nucleotide-binding protein MCCL_0516 (300 aa).

15 to 22 (GMSGAGKS) lines the ATP pocket. 66-69 (DLRG) is a binding site for GTP.

This sequence belongs to the RapZ-like family.

Its function is as follows. Displays ATPase and GTPase activities. The sequence is that of Nucleotide-binding protein MCCL_0516 from Macrococcus caseolyticus (strain JCSC5402) (Macrococcoides caseolyticum).